Here is a 348-residue protein sequence, read N- to C-terminus: Anthranilate phosphoribosyltransferase (348 aa).

5-phospho-alpha-D-ribose 1-diphosphate contacts are provided by residues glycine 91, glycine 94–aspartate 95, threonine 99, asparagine 101–threonine 104, lysine 119–glycine 127, and serine 131. Position 91 (glycine 91) interacts with anthranilate. Serine 103 is a Mg(2+) binding site. Asparagine 122 is an anthranilate binding site. Anthranilate is bound at residue arginine 177. The Mg(2+) site is built by aspartate 236 and glutamate 237.

Belongs to the anthranilate phosphoribosyltransferase family. As to quaternary structure, homodimer. The cofactor is Mg(2+).

The enzyme catalyses N-(5-phospho-beta-D-ribosyl)anthranilate + diphosphate = 5-phospho-alpha-D-ribose 1-diphosphate + anthranilate. Its pathway is amino-acid biosynthesis; L-tryptophan biosynthesis; L-tryptophan from chorismate: step 2/5. Catalyzes the transfer of the phosphoribosyl group of 5-phosphorylribose-1-pyrophosphate (PRPP) to anthranilate to yield N-(5'-phosphoribosyl)-anthranilate (PRA). This Synechococcus sp. (strain ATCC 27144 / PCC 6301 / SAUG 1402/1) (Anacystis nidulans) protein is Anthranilate phosphoribosyltransferase.